The chain runs to 66 residues: Sodium/potassium-transporting ATPase subunit gamma (66 aa).

A helical transmembrane segment spans residues 29–46 (GGLIFAGLAFVVGLLILL).

This sequence belongs to the FXYD family. In terms of assembly, regulatory subunit of the sodium/potassium-transporting ATPase which is composed of a catalytic alpha subunit, an auxiliary non-catalytic beta subunit and an additional regulatory subunit. In terms of tissue distribution, highest levels expressed in the kidney and spleen. Restricted to the basolateral membrane in renal epithelial cells and varies in its level of expression along the nephron.

The protein resides in the membrane. May be involved in forming the receptor site for cardiac glycoside binding or may modulate the transport function of the sodium ATPase. The sequence is that of Sodium/potassium-transporting ATPase subunit gamma (Fxyd2) from Rattus norvegicus (Rat).